The chain runs to 82 residues: MSPKVQALLLLVGLITFLAVHAEEELSETVESERSCAKEYQWCDWNTRPCCDNISCICSWIGTNCECKKGIIRTIKDWYKGK.

An N-terminal signal peptide occupies residues 1–22 (MSPKVQALLLLVGLITFLAVHA). Residues 23 to 34 (EEELSETVESER) constitute a propeptide that is removed on maturation. Disulfide bonds link Cys-36–Cys-51, Cys-43–Cys-56, Cys-50–Cys-67, and Cys-58–Cys-65.

The protein belongs to the neurotoxin 02 (plectoxin) family. 04 (U16-lycotoxin) subfamily. As to expression, expressed by the venom gland.

Its subcellular location is the secreted. The chain is U16-lycotoxin-Ls1a from Lycosa singoriensis (Wolf spider).